Consider the following 508-residue polypeptide: Photosystem II CP47 reaction center protein (508 aa).

Transmembrane regions (helical) follow at residues 21–36 (AVHIMHTALVAGWAGS), 101–115 (IVFSGLCFLAAIWHW), 140–156 (GIHLFLAGLACFGFGAF), 203–218 (IAAGTLGILAGLFHLS), 237–252 (VLSSSIAAVFFAAFVV), and 457–472 (SFALLFFFGHIWHGAR).

This sequence belongs to the PsbB/PsbC family. PsbB subfamily. PSII is composed of 1 copy each of membrane proteins PsbA, PsbB, PsbC, PsbD, PsbE, PsbF, PsbH, PsbI, PsbJ, PsbK, PsbL, PsbM, PsbT, PsbX, PsbY, PsbZ, Psb30/Ycf12, at least 3 peripheral proteins of the oxygen-evolving complex and a large number of cofactors. It forms dimeric complexes. Binds multiple chlorophylls. PSII binds additional chlorophylls, carotenoids and specific lipids. is required as a cofactor.

It localises to the plastid. Its subcellular location is the chloroplast thylakoid membrane. In terms of biological role, one of the components of the core complex of photosystem II (PSII). It binds chlorophyll and helps catalyze the primary light-induced photochemical processes of PSII. PSII is a light-driven water:plastoquinone oxidoreductase, using light energy to abstract electrons from H(2)O, generating O(2) and a proton gradient subsequently used for ATP formation. The chain is Photosystem II CP47 reaction center protein from Daucus carota (Wild carrot).